We begin with the raw amino-acid sequence, 995 residues long: KN motif and ankyrin repeat domain-containing protein 4 (995 aa).

2 disordered regions span residues 1–29 and 68–127; these read MEKT…SVET and TLPR…EVSY. Positions 101-124 are enriched in polar residues; the sequence is LGTQEQNQSPPLGNAPQASTSRSE. The stretch at 343–404 forms a coiled coil; that stretch reads SSLKQQVSAL…EGQFHQENAK (62 aa). Disordered regions lie at residues 443-467, 503-558, 617-642, 663-705, and 721-740; these read ESWG…GNQS, EAGT…PTDA, QAHP…TSLK, LQFV…PDHK, and PEGT…VPHS. Residues 511-523 show a composition bias toward gly residues; that stretch reads GPQGGTRGAGGFL. Residues 526 to 549 show a composition bias toward basic and acidic residues; sequence SDRKTPPAGREETSSNLPGKEHPG. Residues 625–640 are compositionally biased toward low complexity; sequence PASSSSPPVEISPSTS. The span at 680–693 shows a compositional bias: acidic residues; that stretch reads TSGEDSTPEDLSDS. Residues 694-705 show a composition bias toward basic and acidic residues; sequence EAEKKCDGPDHK. ANK repeat units follow at residues 823-853, 862-890, 895-924, 928-958, and 962-992; these read NGNT…NVDH, VMIT…NVNI, GGQT…DVNL, DGSS…DSSL, and AGRT…QGRS.

Strongly expressed in colon, liver, lung, skeletal muscle and kidney.

The protein localises to the cytoplasm. In terms of biological role, may be involved in the control of cytoskeleton formation by regulating actin polymerization. This Homo sapiens (Human) protein is KN motif and ankyrin repeat domain-containing protein 4 (KANK4).